The following is a 564-amino-acid chain: Dihydroxy-acid dehydratase (564 aa).

Aspartate 80 provides a ligand contact to Mg(2+). Residue cysteine 121 participates in [2Fe-2S] cluster binding. Residues aspartate 122 and lysine 123 each coordinate Mg(2+). An N6-carboxylysine modification is found at lysine 123. Residue cysteine 194 coordinates [2Fe-2S] cluster. Glutamate 447 is a Mg(2+) binding site. The active-site Proton acceptor is serine 473.

It belongs to the IlvD/Edd family. As to quaternary structure, homodimer. [2Fe-2S] cluster is required as a cofactor. It depends on Mg(2+) as a cofactor.

It catalyses the reaction (2R)-2,3-dihydroxy-3-methylbutanoate = 3-methyl-2-oxobutanoate + H2O. The catalysed reaction is (2R,3R)-2,3-dihydroxy-3-methylpentanoate = (S)-3-methyl-2-oxopentanoate + H2O. It functions in the pathway amino-acid biosynthesis; L-isoleucine biosynthesis; L-isoleucine from 2-oxobutanoate: step 3/4. Its pathway is amino-acid biosynthesis; L-valine biosynthesis; L-valine from pyruvate: step 3/4. In terms of biological role, functions in the biosynthesis of branched-chain amino acids. Catalyzes the dehydration of (2R,3R)-2,3-dihydroxy-3-methylpentanoate (2,3-dihydroxy-3-methylvalerate) into 2-oxo-3-methylpentanoate (2-oxo-3-methylvalerate) and of (2R)-2,3-dihydroxy-3-methylbutanoate (2,3-dihydroxyisovalerate) into 2-oxo-3-methylbutanoate (2-oxoisovalerate), the penultimate precursor to L-isoleucine and L-valine, respectively. The chain is Dihydroxy-acid dehydratase from Listeria monocytogenes serotype 4b (strain CLIP80459).